Reading from the N-terminus, the 1138-residue chain is Eukaryotic translation initiation factor 3 subunit A (1138 aa).

The 184-residue stretch at 319–502 folds into the PCI domain; that stretch reads LQRMAAHVLL…NSIYFGTDLT (184 aa). 2 disordered regions span residues 590–633 and 817–1138; these read NNAR…NEIQ and ERFR…VKRR. Composition is skewed to basic and acidic residues over residues 817–903, 923–967, 1003–1049, and 1058–1078; these read ERFR…RVER, DRNE…KEND, GRDD…DQPQ, and DSPR…RDVR. A compositionally biased stretch (gly residues) spans 1082–1100; that stretch reads PKEGGGGVSGGGAGGGGGN. Positions 1107–1128 are enriched in basic and acidic residues; sequence PREEKAPPKREQAQDKENKAGD.

Belongs to the eIF-3 subunit A family. Component of the eukaryotic translation initiation factor 3 (eIF-3) complex. The eIF-3 complex interacts with pix.

The protein resides in the cytoplasm. RNA-binding component of the eukaryotic translation initiation factor 3 (eIF-3) complex, which is involved in protein synthesis of a specialized repertoire of mRNAs and, together with other initiation factors, stimulates binding of mRNA and methionyl-tRNAi to the 40S ribosome. The eIF-3 complex specifically targets and initiates translation of a subset of mRNAs involved in cell proliferation. In Drosophila virilis (Fruit fly), this protein is Eukaryotic translation initiation factor 3 subunit A.